Here is a 505-residue protein sequence, read N- to C-terminus: MEELQGYLEIDGFRQHHFLYPLLLQEYIYALAHDHGLNGSILSEPMENFSHDNKSSSLIVKRLITRMHQQNHLIISVNDSNQKGFVGHNKNLYSQRISEGFAVIVEIPFSLQLVFSLEEKEIAKSHNSRSIHSIFPFFEDKLSHLNHVSNILIPYPIHPEILVQTLRCWIQDAPSLHLLRFFLHEYWNSNSLITLKKSISFFSKANQRLFLFLYNSHVYECESVFIFLRKQSSHLRSTFSGSFLERTHFYGKIEHLVVVLGNDFQKTLWLFKDPFMHYVRYQGKSILASRGTPFLMKKWKYHLVNFWQCHFYLWSQPDRIHINQLCNHSFYFLGYLSSVQLNSSVVRSQMLENSFLMDTAIKKFETIVPIIPLIGSLAKAKFCNVSGHPISKPFRTDLSDSEILNRFGRICKNLSHYHSGSSKKQSLYRIKFILRLSCARTLSRKHKSTVRAFLKRLGSELLEEFLTEEEQVLSLIFPRTPSHRPHRERIWYLDIICINDLANHE.

Belongs to the intron maturase 2 family. MatK subfamily.

Its subcellular location is the plastid. It is found in the chloroplast. Its function is as follows. Usually encoded in the trnK tRNA gene intron. Probably assists in splicing its own and other chloroplast group II introns. This is Maturase K from Idiospermum australiense (Ribbonwood tree).